The following is a 144-amino-acid chain: Large ribosomal subunit protein uL15 (144 aa).

Residues 1–57 are disordered; sequence MKLNDLSPAPGSRREKHRPGRGIGSGLGKTGGRGHKGQTSRSGGSIAPGFEGGQQPL. Positions 21–31 are enriched in gly residues; the sequence is RGIGSGLGKTG.

It belongs to the universal ribosomal protein uL15 family. Part of the 50S ribosomal subunit.

Functionally, binds to the 23S rRNA. The protein is Large ribosomal subunit protein uL15 of Pseudomonas putida (strain ATCC 700007 / DSM 6899 / JCM 31910 / BCRC 17059 / LMG 24140 / F1).